A 612-amino-acid chain; its full sequence is Dihydroxy-acid dehydratase (612 aa).

Asp-81 is a Mg(2+) binding site. Residue Cys-122 coordinates [2Fe-2S] cluster. Positions 123 and 124 each coordinate Mg(2+). An N6-carboxylysine modification is found at Lys-124. [2Fe-2S] cluster is bound at residue Cys-195. Glu-491 provides a ligand contact to Mg(2+). The active-site Proton acceptor is Ser-517.

This sequence belongs to the IlvD/Edd family. Homodimer. Requires [2Fe-2S] cluster as cofactor. The cofactor is Mg(2+).

The enzyme catalyses (2R)-2,3-dihydroxy-3-methylbutanoate = 3-methyl-2-oxobutanoate + H2O. The catalysed reaction is (2R,3R)-2,3-dihydroxy-3-methylpentanoate = (S)-3-methyl-2-oxopentanoate + H2O. It participates in amino-acid biosynthesis; L-isoleucine biosynthesis; L-isoleucine from 2-oxobutanoate: step 3/4. Its pathway is amino-acid biosynthesis; L-valine biosynthesis; L-valine from pyruvate: step 3/4. In terms of biological role, functions in the biosynthesis of branched-chain amino acids. Catalyzes the dehydration of (2R,3R)-2,3-dihydroxy-3-methylpentanoate (2,3-dihydroxy-3-methylvalerate) into 2-oxo-3-methylpentanoate (2-oxo-3-methylvalerate) and of (2R)-2,3-dihydroxy-3-methylbutanoate (2,3-dihydroxyisovalerate) into 2-oxo-3-methylbutanoate (2-oxoisovalerate), the penultimate precursor to L-isoleucine and L-valine, respectively. This is Dihydroxy-acid dehydratase from Sinorhizobium fredii (strain NBRC 101917 / NGR234).